Reading from the N-terminus, the 396-residue chain is Cystathionine beta-lyase (396 aa).

An N6-(pyridoxal phosphate)lysine modification is found at Lys211.

Belongs to the trans-sulfuration enzymes family. As to quaternary structure, homotetramer. It depends on pyridoxal 5'-phosphate as a cofactor.

It is found in the cytoplasm. It carries out the reaction L,L-cystathionine + H2O = L-homocysteine + pyruvate + NH4(+). The catalysed reaction is an S-substituted L-cysteine + H2O = a thiol + pyruvate + NH4(+). The protein operates within amino-acid biosynthesis; L-methionine biosynthesis via de novo pathway; L-homocysteine from L-cystathionine: step 1/1. Catalyzes the cleavage of cystathionine to homocysteine, pyruvate and ammonia during methionine biosynthesis. This is Cystathionine beta-lyase (metC) from Haemophilus influenzae (strain ATCC 51907 / DSM 11121 / KW20 / Rd).